Reading from the N-terminus, the 286-residue chain is D-tagatose-1,6-bisphosphate aldolase subunit KbaY (286 aa).

The Proton donor role is filled by D82. Residues H83 and H180 each contribute to the Zn(2+) site. G181 contacts dihydroxyacetone phosphate. H208 contacts Zn(2+). Dihydroxyacetone phosphate is bound by residues 209 to 211 (GAS) and 230 to 233 (NVAT).

This sequence belongs to the class II fructose-bisphosphate aldolase family. TagBP aldolase KbaY subfamily. Homotetramer. Forms a complex with KbaZ. Zn(2+) is required as a cofactor.

It carries out the reaction D-tagatofuranose 1,6-bisphosphate = D-glyceraldehyde 3-phosphate + dihydroxyacetone phosphate. It participates in carbohydrate metabolism; D-tagatose 6-phosphate degradation; D-glyceraldehyde 3-phosphate and glycerone phosphate from D-tagatose 6-phosphate: step 2/2. In terms of biological role, catalytic subunit of the tagatose-1,6-bisphosphate aldolase KbaYZ, which catalyzes the reversible aldol condensation of dihydroxyacetone phosphate (DHAP or glycerone-phosphate) with glyceraldehyde 3-phosphate (G3P) to produce tagatose 1,6-bisphosphate (TBP). Requires KbaZ subunit for full activity and stability. The sequence is that of D-tagatose-1,6-bisphosphate aldolase subunit KbaY from Escherichia coli O7:K1 (strain IAI39 / ExPEC).